The sequence spans 555 residues: MKIDLNTIFPSSRKEYIPGKIYKNIKIGMRKVSFNNDTESIFIYDTGGPHSDQDIQTNINNGIKKLRLNWITDRQDVEYYDRHTINTNSSTAFPLQNNKALKSKSDKPVTQMFYAKNNIITPEMEYVAIRENSLIQKLLSHTPNTIIPEITPELVRQEVAAGRAIIPANINHPESEPMIIGKNFLVKINANIGNSAVSSDINNEVHKMIYAIIYGADTVMDLSTGSHIHNTREWIIRNSPVPIGTVPIYQALNKVNGIVGELDFNIFKETLIEQAEQGVDYFTIHAGVLKKYIQYTTNRLTGIVSRGGAIIAQWCSIHNKENFLYTNFEEICDIMKSYDIAFSLGDGLRPGSIADANDKAQFLELKTLGELTDIAWKHDCQVMIEGPGHVPMHLIKENVEKQIYFCKEAPFYTLGPLTTDIAPGYDHITSAIGAAMIGWYGTSMLCYVTPKEHLGLPNLNDVKNGVITYKIAAHAADLAKGNPSAYIRDYALSHARFNFRWYDQFNLSLDPETAKSFHDESLPSEHAKSAHFCSMCGPKFCSMKLTHQLQLNSTE.

Substrate-binding positions include N191, M220, Y249, H285, 305 to 307, 346 to 349, and E385; these read SRG and DGLR. Residue H389 participates in Zn(2+) binding. A substrate-binding site is contributed by Y412. H453 contributes to the Zn(2+) binding site. C533, C536, and C541 together coordinate [4Fe-4S] cluster.

It belongs to the ThiC family. As to quaternary structure, homodimer. [4Fe-4S] cluster serves as cofactor.

It carries out the reaction 5-amino-1-(5-phospho-beta-D-ribosyl)imidazole + S-adenosyl-L-methionine = 4-amino-2-methyl-5-(phosphooxymethyl)pyrimidine + CO + 5'-deoxyadenosine + formate + L-methionine + 3 H(+). The protein operates within cofactor biosynthesis; thiamine diphosphate biosynthesis. Functionally, catalyzes the synthesis of the hydroxymethylpyrimidine phosphate (HMP-P) moiety of thiamine from aminoimidazole ribotide (AIR) in a radical S-adenosyl-L-methionine (SAM)-dependent reaction. The polypeptide is Phosphomethylpyrimidine synthase (Ehrlichia ruminantium (strain Welgevonden)).